A 310-amino-acid polypeptide reads, in one-letter code: MSYASDVKKELTNLAVHRENAKAELMALIRMNGAISIANHHFILNIQTENPAIARRIYRLLKQFYDVDSELIVRRKMKLNKNNLYIVRLKTGTDMVLADLGILKDYQIVEVAPTEVLTDDAAVRSYLRGAFLAGGSVNNPETSRYHLEIYSLYEEHNHMISEMMNQYGLNSRTTDRRGGFITYIKEAEKIADFLSLVGATNAMLKFEDIRIMRDMRNSVNRLVNCENANMDKVANASSKQIENILLIDATVGLQQLPPKLQEVAVARLEHREVSLKELGTLVPGGPISKSGINHRLRKINQFAEQLQKDA.

The segment at residues 274 to 308 is a DNA-binding region (H-T-H motif); it reads SLKELGTLVPGGPISKSGINHRLRKINQFAEQLQK.

It belongs to the WhiA family.

In terms of biological role, involved in cell division and chromosome segregation. This is Probable cell division protein WhiA from Lactiplantibacillus plantarum (strain ATCC BAA-793 / NCIMB 8826 / WCFS1) (Lactobacillus plantarum).